The primary structure comprises 493 residues: DM7 family protein GM11958 (493 aa).

The disordered stretch occupies residues 434-493 (ATKSTDTRDDGMNTADYQSQFPELEQDSEPEPEPEPEPQTEDEGEDEDIEILASLCSGSI). A compositionally biased stretch (acidic residues) spans 457 to 483 (LEQDSEPEPEPEPEPQTEDEGEDEDIE).

This sequence belongs to the DM7 family.

The protein is DM7 family protein GM11958 of Drosophila sechellia (Fruit fly).